The sequence spans 498 residues: ATP synthase subunit beta, chloroplastic (498 aa).

Position 172-179 (Gly172–Thr179) interacts with ATP.

It belongs to the ATPase alpha/beta chains family. F-type ATPases have 2 components, CF(1) - the catalytic core - and CF(0) - the membrane proton channel. CF(1) has five subunits: alpha(3), beta(3), gamma(1), delta(1), epsilon(1). CF(0) has four main subunits: a(1), b(1), b'(1) and c(9-12).

The protein resides in the plastid. It localises to the chloroplast thylakoid membrane. The catalysed reaction is ATP + H2O + 4 H(+)(in) = ADP + phosphate + 5 H(+)(out). Functionally, produces ATP from ADP in the presence of a proton gradient across the membrane. The catalytic sites are hosted primarily by the beta subunits. This Hyophorbe lagenicaulis (Bottle palm) protein is ATP synthase subunit beta, chloroplastic.